Reading from the N-terminus, the 227-residue chain is MKLVVLCVLCGIALAAPRQKRLTVGTIAVTGGVGGSTGCVVTGNVLYANGFRLRELNPSEQQELVNYEKQVADYKAAVKQALKERQESLKSRMAGKKEKAVTPKEEDLPKAPQKPSFCTEDDTTQFYFDGCMVQGNKVYVGNTFARDLDQNEIQELKEFEKKQTVYQEYVQKQIQAQVSNLFGGADFFSSFFNGGSEKGSSTTTVAPVLPEDAPEQPAGPNFCTRIY.

An N-terminal signal peptide occupies residues 1–15 (MKLVVLCVLCGIALA). Residues 88-109 (SLKSRMAGKKEKAVTPKEEDLP) are compositionally biased toward basic and acidic residues. Residues 88–116 (SLKSRMAGKKEKAVTPKEEDLPKAPQKPS) form a disordered region. Cys131 and Cys223 form a disulfide bridge.

This sequence belongs to the protease inhibitor I33 family.

The protein localises to the secreted. Functionally, aspartyl protease inhibitor. This Ostertagia ostertagi (Brown stomach worm) protein is Aspartyl protease inhibitor (API).